Consider the following 356-residue polypeptide: Replication factor C subunit 3 (356 aa).

The residue at position 20 (Lys20) is an N6-acetyllysine. Phosphoserine is present on Ser125.

The protein belongs to the activator 1 small subunits family. Subunit of the RFC complex, an heteropentameric complex consisting of a large subunit RFC1 and four small subunits RFC2, RFC3, RFC4 and RFC5; the RFC complex interacts with PCNA. Forms an heterotetrameric complex with RFC2, RFC4 and RFC5; this complex has ATPase activity but is not stimulated by PCNA. The heterotetramer of subunits RFC2, RFC3, RFC4 and RFC5 interacts with RAD17. Interacts with CNTD1; this interaction facilitates crossover formation.

The protein resides in the nucleus. In terms of biological role, subunit of the replication factor C (RFC) complex which acts during elongation of primed DNA templates by DNA polymerases delta and epsilon, and is necessary for ATP-dependent loading of proliferating cell nuclear antigen (PCNA) onto primed DNA. The sequence is that of Replication factor C subunit 3 (Rfc3) from Mus musculus (Mouse).